A 137-amino-acid polypeptide reads, in one-letter code: Putative pre-16S rRNA nuclease (137 aa).

Belongs to the YqgF nuclease family.

The protein resides in the cytoplasm. Its function is as follows. Could be a nuclease involved in processing of the 5'-end of pre-16S rRNA. The chain is Putative pre-16S rRNA nuclease from Buchnera aphidicola subsp. Schizaphis graminum (strain Sg).